A 188-amino-acid chain; its full sequence is Succinate-acetate/proton symporter SatP (188 aa).

Over 1 to 13 the chain is Cytoplasmic; it reads MGNTKLANPAPLG. A helical membrane pass occupies residues 14 to 34; sequence LMGFGMTTILLNLHNVGYFAL. A topological domain (periplasmic) is located at residue D35. A helical transmembrane segment spans residues 36–56; that stretch reads GIILAMGIFYGGIAQIFAGLL. At 57–63 the chain is on the cytoplasmic side; that stretch reads EYKKGNT. Residues 64–84 form a helical membrane-spanning segment; that stretch reads FGLTAFTSYGSFWLTLVAILL. Residues 85 to 97 lie on the Periplasmic side of the membrane; it reads MPKLGLTDAPNAQ. A helical transmembrane segment spans residues 98–118; it reads FLGVYLGLWGVFTLFMFFGTL. Residues 119–122 are Cytoplasmic-facing; it reads KGAR. The chain crosses the membrane as a helical span at residues 123-143; it reads VLQFVFFSLTVLFALLAIGNI. At 144–148 the chain is on the periplasmic side; sequence AGNAA. Residues 149 to 169 traverse the membrane as a helical segment; sequence IIHFAGWIGLICGASAIYLAM. Residues 170-188 lie on the Cytoplasmic side of the membrane; that stretch reads GEVLNEQFGRTVLPIGESH.

The protein belongs to the acetate uptake transporter (AceTr) (TC 2.A.96) family.

The protein resides in the cell inner membrane. Its function is as follows. Uptake of acetate and succinate. Transport is energetically dependent on the protonmotive force. The protein is Succinate-acetate/proton symporter SatP (satP) of Escherichia coli O157:H7.